Consider the following 782-residue polypeptide: Endonuclease MutS2 (782 aa).

336–343 (GPNTGGKT) contacts ATP. A Smr domain is found at 707-782 (LDLRGYRYED…GFGVTVATLK (76 aa)).

The protein belongs to the DNA mismatch repair MutS family. MutS2 subfamily. Homodimer. Binds to stalled ribosomes, contacting rRNA.

Its function is as follows. Endonuclease that is involved in the suppression of homologous recombination and thus may have a key role in the control of bacterial genetic diversity. In terms of biological role, acts as a ribosome collision sensor, splitting the ribosome into its 2 subunits. Detects stalled/collided 70S ribosomes which it binds and splits by an ATP-hydrolysis driven conformational change. Acts upstream of the ribosome quality control system (RQC), a ribosome-associated complex that mediates the extraction of incompletely synthesized nascent chains from stalled ribosomes and their subsequent degradation. Probably generates substrates for RQC. The polypeptide is Endonuclease MutS2 (Staphylococcus aureus (strain JH1)).